The primary structure comprises 275 residues: 3-methyl-2-oxobutanoate hydroxymethyltransferase (275 aa).

Asp-49 and Asp-88 together coordinate Mg(2+). 3-methyl-2-oxobutanoate-binding positions include 49–50, Asp-88, and Lys-118; that span reads DS. Glu-120 lines the Mg(2+) pocket. Residue Glu-187 is the Proton acceptor of the active site.

Belongs to the PanB family. As to quaternary structure, homodecamer; pentamer of dimers. It depends on Mg(2+) as a cofactor.

The protein localises to the cytoplasm. The catalysed reaction is 3-methyl-2-oxobutanoate + (6R)-5,10-methylene-5,6,7,8-tetrahydrofolate + H2O = 2-dehydropantoate + (6S)-5,6,7,8-tetrahydrofolate. It participates in cofactor biosynthesis; (R)-pantothenate biosynthesis; (R)-pantoate from 3-methyl-2-oxobutanoate: step 1/2. Functionally, catalyzes the reversible reaction in which hydroxymethyl group from 5,10-methylenetetrahydrofolate is transferred onto alpha-ketoisovalerate to form ketopantoate. This chain is 3-methyl-2-oxobutanoate hydroxymethyltransferase, found in Rhodospirillum centenum (strain ATCC 51521 / SW).